Consider the following 490-residue polypeptide: Hippocampus abundant transcript 1 protein (490 aa).

M1 is subject to N-acetylmethionine. The Extracellular segment spans residues 1–40; the sequence is MTQGKKKKRAANRSIMLAKKIIIKDGGTPQGIGSPSVYHA. Residue N12 is glycosylated (N-linked (GlcNAc...) asparagine). A helical transmembrane segment spans residues 41 to 61; the sequence is VIVIFLEFFAWGLLTAPTLVV. The Cytoplasmic segment spans residues 62 to 74; the sequence is LHETFPKHTFLMN. A helical membrane pass occupies residues 75–95; it reads GLIQGVKGLLSFLSAPLIGAL. The Extracellular portion of the chain corresponds to 96–103; that stretch reads SDVWGRKS. A helical transmembrane segment spans residues 104-124; it reads FLLLTVFFTCAPIPLMKISPW. Residues 125–126 are Cytoplasmic-facing; that stretch reads WY. A helical membrane pass occupies residues 127-147; sequence FAVISVSGVFAVTFSVVFAYV. The Extracellular segment spans residues 148–160; it reads ADITQEHERSMAY. A helical transmembrane segment spans residues 161–181; sequence GLVSATFAASLVTSPAIGAYL. Residues 182–188 lie on the Cytoplasmic side of the membrane; the sequence is GRVYGDS. Residues 189 to 209 form a helical membrane-spanning segment; sequence LVVVLATAIALLDICFILVAV. Residues 210–243 lie on the Extracellular side of the membrane; that stretch reads PESLPEKMRPASWGAPISWEQADPFASLKKVGQD. Residues 244-264 form a helical membrane-spanning segment; sequence SIVLLICITVFLSYLPEAGQY. The Cytoplasmic portion of the chain corresponds to 265–284; that stretch reads SSFFLYLRQIMKFSPESVAA. The helical transmembrane segment at 285–305 threads the bilayer; it reads FIAVLGILSIIAQTIVLSLLM. The Extracellular segment spans residues 306-313; it reads RSIGNKNT. The helical transmembrane segment at 314–334 threads the bilayer; it reads ILLGLGFQILQLAWYGFGSEP. Topologically, residues 335–337 are cytoplasmic; that stretch reads WMM. The chain crosses the membrane as a helical span at residues 338 to 358; that stretch reads WAAGAVAAMSSITFPAVSALV. Topologically, residues 359–379 are extracellular; that stretch reads SRTADADQQGVVQGMITGIRG. A helical membrane pass occupies residues 380–400; sequence LCNGLGPALYGFIFYIFHVEL. Residues 401-427 are Cytoplasmic-facing; that stretch reads KELPITGTDLGTNTSPQHHFEQNSIIP. The helical transmembrane segment at 428-448 threads the bilayer; the sequence is GPPFLFGACSVLLALLVALFI. Residues 449-490 are Extracellular-facing; sequence PEHTNLSLRSSSWRKHCGSHSHPHSTQAPGEAKEPLLQDTNV. N-linked (GlcNAc...) asparagine glycosylation is present at N453. The disordered stretch occupies residues 466-490; it reads GSHSHPHSTQAPGEAKEPLLQDTNV.

The protein belongs to the major facilitator superfamily. As to expression, expressed in various tissues.

It localises to the membrane. This Mus musculus (Mouse) protein is Hippocampus abundant transcript 1 protein.